Here is a 210-residue protein sequence, read N- to C-terminus: Nucleoside triphosphate pyrophosphatase (210 aa).

Asp-80 acts as the Proton acceptor in catalysis.

This sequence belongs to the Maf family. It depends on a divalent metal cation as a cofactor.

It localises to the cytoplasm. It catalyses the reaction a ribonucleoside 5'-triphosphate + H2O = a ribonucleoside 5'-phosphate + diphosphate + H(+). It carries out the reaction a 2'-deoxyribonucleoside 5'-triphosphate + H2O = a 2'-deoxyribonucleoside 5'-phosphate + diphosphate + H(+). Nucleoside triphosphate pyrophosphatase. May have a dual role in cell division arrest and in preventing the incorporation of modified nucleotides into cellular nucleic acids. The protein is Nucleoside triphosphate pyrophosphatase of Mycobacterium sp. (strain JLS).